A 291-amino-acid chain; its full sequence is ATP synthase gamma chain (291 aa).

It belongs to the ATPase gamma chain family. F-type ATPases have 2 components, CF(1) - the catalytic core - and CF(0) - the membrane proton channel. CF(1) has five subunits: alpha(3), beta(3), gamma(1), delta(1), epsilon(1). CF(0) has three main subunits: a, b and c.

The protein localises to the cell inner membrane. Its function is as follows. Produces ATP from ADP in the presence of a proton gradient across the membrane. The gamma chain is believed to be important in regulating ATPase activity and the flow of protons through the CF(0) complex. This Neisseria meningitidis serogroup C / serotype 2a (strain ATCC 700532 / DSM 15464 / FAM18) protein is ATP synthase gamma chain.